A 282-amino-acid chain; its full sequence is Bis(5'-nucleosyl)-tetraphosphatase, symmetrical (282 aa).

Belongs to the Ap4A hydrolase family.

It catalyses the reaction P(1),P(4)-bis(5'-adenosyl) tetraphosphate + H2O = 2 ADP + 2 H(+). Functionally, hydrolyzes diadenosine 5',5'''-P1,P4-tetraphosphate to yield ADP. The protein is Bis(5'-nucleosyl)-tetraphosphatase, symmetrical of Sodalis glossinidius (strain morsitans).